Here is a 149-residue protein sequence, read N- to C-terminus: Small ribosomal subunit protein uS15 (149 aa).

The segment covering 1 to 14 has biased composition (basic residues); it reads MGRMHTHRHGKSHS. Residues 1–20 form a disordered region; it reads MGRMHTHRHGKSHSIRPATL.

This sequence belongs to the universal ribosomal protein uS15 family. Part of the 30S ribosomal subunit.

This chain is Small ribosomal subunit protein uS15, found in Nitrosopumilus maritimus (strain SCM1).